The chain runs to 235 residues: Adenosine 5'-phosphosulfate reductase (235 aa).

4 residues coordinate [4Fe-4S] cluster: cysteine 121, cysteine 122, cysteine 204, and cysteine 207. The Nucleophile; cysteine thiosulfonate intermediate role is filled by cysteine 230.

This sequence belongs to the PAPS reductase family. CysH subfamily. [4Fe-4S] cluster is required as a cofactor.

The protein resides in the cytoplasm. It carries out the reaction [thioredoxin]-disulfide + sulfite + AMP + 2 H(+) = adenosine 5'-phosphosulfate + [thioredoxin]-dithiol. It functions in the pathway sulfur metabolism; hydrogen sulfide biosynthesis; sulfite from sulfate. Its function is as follows. Catalyzes the formation of sulfite from adenosine 5'-phosphosulfate (APS) using thioredoxin as an electron donor. The chain is Adenosine 5'-phosphosulfate reductase from Geobacillus sp. (strain WCH70).